The following is a 698-amino-acid chain: Polyribonucleotide nucleotidyltransferase (698 aa).

Asp488 and Asp494 together coordinate Mg(2+). The region spanning Pro555–Ile614 is the KH domain. The S1 motif domain occupies Gly624–Lys692.

It belongs to the polyribonucleotide nucleotidyltransferase family. Component of the RNA degradosome, which is a multiprotein complex involved in RNA processing and mRNA degradation. The cofactor is Mg(2+).

The protein resides in the cytoplasm. It carries out the reaction RNA(n+1) + phosphate = RNA(n) + a ribonucleoside 5'-diphosphate. Involved in mRNA degradation. Catalyzes the phosphorolysis of single-stranded polyribonucleotides processively in the 3'- to 5'-direction. The protein is Polyribonucleotide nucleotidyltransferase of Alkalilimnicola ehrlichii (strain ATCC BAA-1101 / DSM 17681 / MLHE-1).